The sequence spans 117 residues: Fluoride-specific ion channel FluC 2 (117 aa).

The next 2 membrane-spanning stretches (helical) occupy residues 1–21 (MISIILVMIGGGFGAIARSAI) and 46–66 (FLIGLTIGLSISISWFPAFFV). Residues glycine 71 and threonine 74 each coordinate Na(+). A helical membrane pass occupies residues 95-115 (LFLNYSLLQFIIGFIACYIGY).

It belongs to the fluoride channel Fluc/FEX (TC 1.A.43) family.

The protein localises to the cell membrane. It catalyses the reaction fluoride(in) = fluoride(out). With respect to regulation, na(+) is not transported, but it plays an essential structural role and its presence is essential for fluoride channel function. Fluoride-specific ion channel. Important for reducing fluoride concentration in the cell, thus reducing its toxicity. This Staphylococcus aureus (strain NCTC 8325 / PS 47) protein is Fluoride-specific ion channel FluC 2.